Reading from the N-terminus, the 500-residue chain is Cytochrome P450 71B22 (500 aa).

A helical membrane pass occupies residues 1–21; that stretch reads MSISLYFLLLLPLFLIFFKKL. Cysteine 441 is a heme binding site.

Belongs to the cytochrome P450 family. Heme serves as cofactor.

The protein resides in the membrane. In Arabidopsis thaliana (Mouse-ear cress), this protein is Cytochrome P450 71B22 (CYP71B22).